Here is a 922-residue protein sequence, read N- to C-terminus: GPI inositol-deacylase (922 aa).

Residues 1–11 (MFLHSVNLWNL) lie on the Cytoplasmic side of the membrane. The chain crosses the membrane as a helical span at residues 12–32 (AFYVFMVFLATLGLWDVFFGF). Over 33-597 (EENKCSMSYM…GQVVRFHGGA (565 aa)) the chain is Lumenal. Serine 174 is a catalytic residue. Residues asparagine 363, asparagine 402, and asparagine 558 are each glycosylated (N-linked (GlcNAc...) asparagine). Residues 598 to 618 (LPAYVVSSILLAYGGQLYSLL) traverse the membrane as a helical segment. The Cytoplasmic segment spans residues 619 to 641 (STGYCLEYSTILDKEAKPYKVDP). Residues 642–662 (FVIMIKFLLGYKWFKELWDAV) traverse the membrane as a helical segment. The Lumenal segment spans residues 663–668 (LLPELD). The chain crosses the membrane as a helical span at residues 669-689 (AIVLTSQSMCFPLVSLILFLF). Residues 690 to 694 (GTCTA) are Cytoplasmic-facing. Residues 695-715 (YWSGLLSSTSVQLLSSLWLAL) traverse the membrane as a helical segment. At 716 to 733 (KRPAELPKDIKVMSPDLP) the chain is on the lumenal side. A helical transmembrane segment spans residues 734–754 (VLTVVFLIVSWTTCGALAILL). Over 755 to 817 (SYLYYVFKVV…DAEDSLRMHS (63 aa)) the chain is Cytoplasmic. The interval 776–798 (NQPVNPKHSRRSEKKSNHHKDSA) is disordered. Residues 782-793 (KHSRRSEKKSNH) are compositionally biased toward basic residues. Residues 818–838 (TVINLLTWVVLLSMPSLIYWL) form a helical membrane-spanning segment. Topologically, residues 839-894 (KNLRYYFKLSPDPCKPLAFLLIPAIAILGNTHTVSVKSSKLLKTVSQFPLPLAVGV) are lumenal. The helical transmembrane segment at 895-915 (IAFGSSHLYRVPCFVIIPLVF) threads the bilayer. Residues 916–922 (HALCNFM) are Cytoplasmic-facing.

The protein belongs to the GPI inositol-deacylase family.

It localises to the endoplasmic reticulum membrane. GPI inositol-deacylase that catalyzes the remove of the acyl chain linked to the 2-OH position of inositol ring from the GPI-anchored protein (GPI-AP) in the endoplasmic reticulum. Initiates the post-attachment remodeling phase of GPI-AP biogenesis and participates in endoplasmic reticulum (ER)-to-Golgi transport of GPI-anchored protein. This is GPI inositol-deacylase from Mus musculus (Mouse).